The chain runs to 292 residues: Ribonuclease Z (292 aa).

7 residues coordinate Zn(2+): H60, H62, D64, H65, H132, D200, and H256. Residue D64 is the Proton acceptor of the active site.

This sequence belongs to the RNase Z family. In terms of assembly, homodimer. It depends on Zn(2+) as a cofactor.

It carries out the reaction Endonucleolytic cleavage of RNA, removing extra 3' nucleotides from tRNA precursor, generating 3' termini of tRNAs. A 3'-hydroxy group is left at the tRNA terminus and a 5'-phosphoryl group is left at the trailer molecule.. Zinc phosphodiesterase, which displays some tRNA 3'-processing endonuclease activity. Probably involved in tRNA maturation, by removing a 3'-trailer from precursor tRNA. This is Ribonuclease Z from Sulfolobus acidocaldarius (strain ATCC 33909 / DSM 639 / JCM 8929 / NBRC 15157 / NCIMB 11770).